The chain runs to 663 residues: Capsid scaffolding protein (663 aa).

Active-site charge relay system residues include His-49, Ser-116, and His-135. Positions 329–348 are interaction with pAP; that stretch reads DDFIWVPIKSYNQLVSRNAS. Disordered stretches follow at residues 444 to 471, 486 to 512, and 583 to 608; these read RPVDEEHRGDDMHTTREERGRRGRKRPY, EFRRSNFSPPQASSMKYEETTGGRHDL, and MPSTEGKTSTNSTVIPVPVSDPEAGR. The segment covering 490 to 499 has biased composition (polar residues); it reads SNFSPPQASS. A compositionally biased stretch (basic and acidic residues) spans 501-512; the sequence is KYEETTGGRHDL. Residues 587 to 596 show a composition bias toward polar residues; it reads EGKTSTNSTV. The tract at residues 643-663 is interaction with major capsid protein; that stretch reads GIHRTSDAGVDVFINQMMAHQ.

Belongs to the herpesviridae capsid scaffolding protein family. In terms of assembly, homomultimer. Interacts with major capsid protein. As to quaternary structure, exists in a monomer-dimer equilibrium with the dimer being the active species. Post-translationally, capsid scaffolding protein is cleaved by assemblin after formation of the spherical procapsid. As a result, the capsid obtains its mature, icosahedral shape. Cleavages occur at two or more sites: release (R-site) and maturation (M-site).

The protein resides in the host cytoplasm. It is found in the host nucleus. It catalyses the reaction Cleaves -Ala-|-Ser- and -Ala-|-Ala- bonds in the scaffold protein.. Its function is as follows. Acts as a scaffold protein by binding major capsid protein in the cytoplasm, inducing the nuclear localization of both proteins. Multimerizes in the nucleus such as major capsid protein forms the icosahedral T=16 capsid. Autocatalytic cleavage releases the assembly protein, and subsequently abolishes interaction with major capsid protein. Cleavages products are evicted from the capsid before or during DNA packaging. In terms of biological role, protease that plays an essential role in virion assembly within the nucleus. Catalyzes the cleavage of the assembly protein after formation of the spherical procapsid. By that cleavage, the capsid matures and gains its icosahedral shape. The cleavage sites seem to include -Ala-Ser-, -Ala-Ala-, as well as Ala-Thr bonds. Assemblin and cleavages products are evicted from the capsid before or during DNA packaging. Functionally, plays a major role in capsid assembly. Acts as a scaffold protein by binding major capsid protein. Multimerizes in the nucleus such as major capsid protein forms the icosahedral T=16 capsid. Cleaved by assemblin after capsid completion. The cleavages products are evicted from the capsid before or during DNA packaging. The protein is Capsid scaffolding protein (MDV038) of Gallid herpesvirus 2 (strain Chicken/Md5/ATCC VR-987) (GaHV-2).